The chain runs to 113 residues: UPF0145 protein TK1926 (113 aa).

This sequence belongs to the UPF0145 family.

This Thermococcus kodakarensis (strain ATCC BAA-918 / JCM 12380 / KOD1) (Pyrococcus kodakaraensis (strain KOD1)) protein is UPF0145 protein TK1926.